The chain runs to 80 residues: Centromere protein X (80 aa).

This sequence belongs to the CENP-X/MHF2 family. In terms of assembly, heterodimer with CENPX, sometimes called MHF; this interaction stabilizes both partners. MHF heterodimers can assemble to form tetrameric structures. MHF also coassemble with CENPT-CENPW heterodimers at centromeres to form the tetrameric CENP-T-W-S-X complex. Forms a discrete complex with FANCM and CENPX, called FANCM-MHF; this interaction, probably mediated by direct binding between CENPS and FANCM, leads to synergistic activation of double-stranded DNA binding and strongly stimulates FANCM-mediated DNA remodeling. Recruited by FANCM to the Fanconi anemia (FA) core complex, which consists of CENPS, CENPX, FANCA, FANCB, FANCC, FANCE, FANCF, FANCG, FANCL, FANCM, FAAP24 and FAAP100. The FA core complex associates with Bloom syndrome (BLM) complex, which consists of at least BLM, DNA topoisomerase 3-alpha (TOP3A), RMI1/BLAP75, RPA1/RPA70 and RPA2/RPA32. The super complex between FA and BLM is called BRAFT.

The protein localises to the nucleus. Its subcellular location is the chromosome. It is found in the centromere. The protein resides in the kinetochore. Functionally, DNA-binding component of the Fanconi anemia (FA) core complex. Required for the normal activation of the FA pathway, leading to monoubiquitination of the FANCI-FANCD2 complex in response to DNA damage, cellular resistance to DNA cross-linking drugs, and prevention of chromosomal breakage. In complex with CENPS (MHF heterodimer), crucial cofactor for FANCM in both binding and ATP-dependent remodeling of DNA. Stabilizes FANCM. In complex with CENPS and FANCM (but not other FANC proteins), rapidly recruited to blocked forks and promotes gene conversion at blocked replication forks. In complex with CENPS, CENPT and CENPW (CENP-T-W-S-X heterotetramer), involved in the formation of a functional kinetochore outer plate, which is essential for kinetochore-microtubule attachment and faithful mitotic progression. As a component of MHF and CENP-T-W-S-X complexes, binds DNA and bends it to form a nucleosome-like structure. DNA-binding function is fulfilled in the presence of CENPS, with the following preference for DNA substates: Holliday junction &gt; double-stranded &gt; splay arm &gt; single-stranded. Does not bind DNA on its own. The sequence is that of Centromere protein X (CENPX) from Gallus gallus (Chicken).